Reading from the N-terminus, the 669-residue chain is MSESKQQYLEELKQQLHYHAVRYYVEDNPEIPDAEYDRMMRELMAIEAEHPEWISVDSPSQRVGGVALDSFRQVTHEIPMLSLDNAFSDEELESFLKRAQDRMPSAHIDAFCCEPKLDGLAVSLLYENGVLVQAATRGDGTTGENITENVRTIASVPLKLQGEGWPSRIEVRGEVFMPKVGFEKLNDIARKKGEKVFVNPRNAAAGSLRQLDSKITATRPLAFYAYSVGVVEGISLSSSHYQRFLQLKQWGLPMCPETKLVNGLESVKAFYADILNRRDALPYEIDGVVIKIDDIVIQEKLGFVARAPRWAIAYKFPAQEELTLLNDVEFQVGRTGAITPVAKLEPVFVGGVTVSNATLHNADEIERLGVMVGDTVVIRRAGDVIPQIVSVVKERRKGDENPIVFPTSCPVCHSHVERIEGEAVTRCSGGLVCQAQRKEALKHFVSRKALDVDGLGDKVIEQLVDKEMVETPADLFTLSAGVLTVLERMGPKSAQNIVNALNVAKETTLARFLYSLGIREVGEATAANLARHFKTLEAIQTATHEQLIEVPDIGEVVARHITAFFAEEKNQRVVQALIEQGIVWPPVEELGSEIPQPLAGKVVVLTGTLTQLSRGDAKAALERLGAKVTGSVSKKTDIVFAGEAAGSKLTKAQELGVEIQTEQDLLALL.

Residues 33 to 37 (DAEYD), 82 to 83 (SL), and Glu-114 each bind NAD(+). The N6-AMP-lysine intermediate role is filled by Lys-116. Residues Arg-137, Glu-174, Lys-291, and Lys-315 each contribute to the NAD(+) site. 4 residues coordinate Zn(2+): Cys-409, Cys-412, Cys-427, and Cys-433. The BRCT domain occupies 593 to 669 (EIPQPLAGKV…QTEQDLLALL (77 aa)).

The protein belongs to the NAD-dependent DNA ligase family. LigA subfamily. The cofactor is Mg(2+). Mn(2+) is required as a cofactor.

The enzyme catalyses NAD(+) + (deoxyribonucleotide)n-3'-hydroxyl + 5'-phospho-(deoxyribonucleotide)m = (deoxyribonucleotide)n+m + AMP + beta-nicotinamide D-nucleotide.. DNA ligase that catalyzes the formation of phosphodiester linkages between 5'-phosphoryl and 3'-hydroxyl groups in double-stranded DNA using NAD as a coenzyme and as the energy source for the reaction. It is essential for DNA replication and repair of damaged DNA. This Vibrio vulnificus (strain YJ016) protein is DNA ligase.